The primary structure comprises 747 residues: NAD-dependent protein deacetylase sirtuin-1 (747 aa).

The tract at residues Met1–Ala135 is disordered. N-acetylalanine is present on Ala2. The segment at Ala2–Ala139 is interaction with CLOCK. The interaction with H1-4 stretch occupies residues Ala2–Cys268. 2 positions are modified to phosphoserine: Ser14 and Ser26. Position 27 is a phosphoserine; by MAPK8 (Ser27). The Nuclear localization signal motif lies at Pro32–Arg39. Ser47 is subject to Phosphoserine; by MAPK8. A compositionally biased stretch (low complexity) spans Pro61 to Glu100. Positions Leu120–Ala135 are enriched in acidic residues. The Nuclear export signal signature appears at Ala138 to Asn145. The interval Arg143 to Pro541 is interaction with CCAR2. 4 positions are modified to phosphoserine: Ser159, Ser162, Ser172, and Ser173. Positions Ile223–Glu230 match the Nuclear localization signal motif. Residues Lys236 to Glu496 enclose the Deacetylase sirtuin-type domain. Lys238 is subject to N6-acetyllysine. The tract at residues Ile256–Leu259 is required for interaction with the sumoylated form of CCAR2. NAD(+)-binding positions include Gly261–Tyr280 and Gln345–Asp348. The Proton acceptor role is filled by His363. Zn(2+) is bound by residues Cys371 and Cys374. The residue at position 377 (Lys377) is an N6-acetyllysine. Residues Cys395 and Cys398 each contribute to the Zn(2+) site. 2 positions are modified to S-nitrosocysteine: Cys395 and Cys398. The short motif at Ala425–Asp431 is the Nuclear export signal element. The residue at position 430 (Lys430) is an N6-acetyllysine. NAD(+)-binding positions include Gly440–Ser442, Asn465–Glu467, and Cys482. Lys513 carries the post-translational modification N6-acetyllysine. 2 disordered regions span residues Tyr523 to Ser549 and Ser562 to Asn587. Position 530 is a phosphothreonine; by DYRK1A, DYRK3 and MAPK8 (Thr530). The residue at position 535 (Ser535) is a Phosphoserine. Over residues Asp537–Ser549 the composition is skewed to polar residues. The interval Ser538–Ser540 is phosphorylated at one of three serine residues. The residue at position 544 (Thr544) is a Phosphothreonine. A Phosphoserine modification is found at Ser545. A compositionally biased stretch (basic and acidic residues) spans Ser569–Gln580. N6-acetyllysine is present on Lys610. Ser659 and Ser661 each carry phosphoserine; by CaMK2. Residues Asp663–Ala726 are disordered. Over residues Leu666 to Ser677 the composition is skewed to low complexity. Over residues Glu687–Asp707 the composition is skewed to acidic residues. Thr719 carries the phosphothreonine modification. Ser747 is subject to Phosphoserine.

The protein belongs to the sirtuin family. Class I subfamily. As to quaternary structure, interacts with XBP1 isoform 2. Found in a complex with PCAF and MYOD1. Interacts with FOXO1; the interaction deacetylates FOXO1, resulting in its nuclear retention and promotion of its transcriptional activity Component of the eNoSC complex, composed of SIRT1, SUV39H1 and RRP8. Interacts with HES1, HEY2 and PML. Interacts with RPS19BP1/AROS. Interacts with CCAR2 (via N-terminus); the interaction disrupts the interaction between SIRT1 and p53/TP53. Interacts with SETD7; the interaction induces the dissociation of SIRT1 from p53/TP53 and increases p53/TP53 activity. Interacts with MYCN, NR1I2, CREBZF, TSC2, TLE1, FOS, JUN, NR0B2, PPARG, NCOR, IRS1, IRS2 and NMNAT1. Interacts with HNF1A; the interaction occurs under nutrient restriction. Interacts with SUZ12; the interaction mediates the association with the PRC4 histone methylation complex which is specific as an association with PCR2 and PCR3 complex variants is not found. Interacts with BCL6; leads to a epigenetic repression of specific target genes. Interacts with CLOCK, BMAL1 and PER2. Interacts with PPARA; the interaction seems to be modulated by NAD(+) levels. Interacts with NR1H3 and this interaction is inhibited in the presence of CCAR2. Interacts with CHEK2. Interacts with p53/TP53. Exhibits a preferential interaction with sumoylated CCAR2 over its unmodified form. Interacts with PACS2. Interacts with SIRT7. Interacts with PUS7. Interacts with TULP3. Interacts with MORN3; the interaction enhances the ubiquitination of p53/TP53. In terms of assembly, (Microbial infection) Interacts with HIV-1 Tat. The cofactor is Zn(2+). Post-translationally, methylated on multiple lysine residues; methylation is enhanced after DNA damage and is dispensable for deacetylase activity toward p53/TP53. Phosphorylated. Phosphorylated by STK4/MST1, resulting in inhibition of SIRT1-mediated p53/TP53 deacetylation. Phosphorylation by MAPK8/JNK1 at Ser-27, Ser-47, and Thr-530 leads to increased nuclear localization and enzymatic activity. Phosphorylation at Thr-530 by DYRK1A and DYRK3 activates deacetylase activity and promotes cell survival. Phosphorylation by mammalian target of rapamycin complex 1 (mTORC1) at Ser-47 inhibits deacetylation activity. Phosphorylated by CaMK2, leading to increased p53/TP53 and NF-kappa-B p65/RELA deacetylation activity. Phosphorylation at Ser-27 implicating MAPK9 is linked to protein stability. There is some ambiguity for some phosphosites: Ser-159/Ser-162 and Thr-544/Ser-545. In terms of processing, proteolytically cleaved by cathepsin B upon TNF-alpha treatment to yield catalytic inactive but stable SirtT1 75 kDa fragment (75SirT1). Post-translationally, S-nitrosylated by GAPDH, leading to inhibit the NAD-dependent protein deacetylase activity. Acetylated at various Lys residues. Deacetylated via an autocatalytic mechanism. Autodeacetylation at Lys-238 promotes its protein deacetylase activity. In terms of processing, ubiquitinated; leading to degradation. Deubiquitinated by USP22; leading to stabilization. In terms of tissue distribution, widely expressed.

The protein resides in the nucleus. Its subcellular location is the PML body. It is found in the cytoplasm. The protein localises to the mitochondrion. It catalyses the reaction N(6)-acetyl-L-lysyl-[protein] + NAD(+) + H2O = 2''-O-acetyl-ADP-D-ribose + nicotinamide + L-lysyl-[protein]. The catalysed reaction is N(6)-propanoyl-L-lysyl-[protein] + NAD(+) + H2O = 3''-O-propanoyl-ADP-D-ribose + nicotinamide + L-lysyl-[protein]. It carries out the reaction N(6)-(2E)-butenoyl-L-lysyl-[protein] + NAD(+) + H2O = 2''-O-(2E)-but-2-enoyl-ADP-D-ribose + nicotinamide + L-lysyl-[protein]. The enzyme catalyses N(6)-[(S)-lactoyl]-L-lysyl-[protein] + NAD(+) + H2O = 2''-O-(S)-lactoyl-ADP-D-ribose + nicotinamide + L-lysyl-[protein]. Its activity is regulated as follows. Inhibited by nicotinamide. Activated by resveratrol (3,5,4'-trihydroxy-trans-stilbene), butein (3,4,2',4'-tetrahydroxychalcone), piceatannol (3,5,3',4'-tetrahydroxy-trans-stilbene), Isoliquiritigenin (4,2',4'-trihydroxychalcone), fisetin (3,7,3',4'-tetrahydroxyflavone) and quercetin (3,5,7,3',4'-pentahydroxyflavone). MAPK8/JNK1 and RPS19BP1/AROS act as positive regulators of deacetylation activity. Negatively regulated by CCAR2. NAD-dependent protein deacetylase that links transcriptional regulation directly to intracellular energetics and participates in the coordination of several separated cellular functions such as cell cycle, response to DNA damage, metabolism, apoptosis and autophagy. Can modulate chromatin function through deacetylation of histones and can promote alterations in the methylation of histones and DNA, leading to transcriptional repression. Deacetylates a broad range of transcription factors and coregulators, thereby regulating target gene expression positively and negatively. Serves as a sensor of the cytosolic ratio of NAD(+)/NADH which is altered by glucose deprivation and metabolic changes associated with caloric restriction. Is essential in skeletal muscle cell differentiation and in response to low nutrients mediates the inhibitory effect on skeletal myoblast differentiation which also involves 5'-AMP-activated protein kinase (AMPK) and nicotinamide phosphoribosyltransferase (NAMPT). Component of the eNoSC (energy-dependent nucleolar silencing) complex, a complex that mediates silencing of rDNA in response to intracellular energy status and acts by recruiting histone-modifying enzymes. The eNoSC complex is able to sense the energy status of cell: upon glucose starvation, elevation of NAD(+)/NADP(+) ratio activates SIRT1, leading to histone H3 deacetylation followed by dimethylation of H3 at 'Lys-9' (H3K9me2) by SUV39H1 and the formation of silent chromatin in the rDNA locus. Deacetylates 'Lys-266' of SUV39H1, leading to its activation. Inhibits skeletal muscle differentiation by deacetylating PCAF and MYOD1. Deacetylates H2A and 'Lys-26' of H1-4. Deacetylates 'Lys-16' of histone H4 (in vitro). Involved in NR0B2/SHP corepression function through chromatin remodeling: Recruited to LRH1 target gene promoters by NR0B2/SHP thereby stimulating histone H3 and H4 deacetylation leading to transcriptional repression. Proposed to contribute to genomic integrity via positive regulation of telomere length; however, reports on localization to pericentromeric heterochromatin are conflicting. Proposed to play a role in constitutive heterochromatin (CH) formation and/or maintenance through regulation of the available pool of nuclear SUV39H1. Upon oxidative/metabolic stress decreases SUV39H1 degradation by inhibiting SUV39H1 polyubiquitination by MDM2. This increase in SUV39H1 levels enhances SUV39H1 turnover in CH, which in turn seems to accelerate renewal of the heterochromatin which correlates with greater genomic integrity during stress response. Deacetylates 'Lys-382' of p53/TP53 and impairs its ability to induce transcription-dependent proapoptotic program and modulate cell senescence. Deacetylates TAF1B and thereby represses rDNA transcription by the RNA polymerase I. Deacetylates MYC, promotes the association of MYC with MAX and decreases MYC stability leading to compromised transformational capability. Deacetylates FOXO3 in response to oxidative stress thereby increasing its ability to induce cell cycle arrest and resistance to oxidative stress but inhibiting FOXO3-mediated induction of apoptosis transcriptional activity; also leading to FOXO3 ubiquitination and protesomal degradation. Appears to have a similar effect on MLLT7/FOXO4 in regulation of transcriptional activity and apoptosis. Deacetylates DNMT1; thereby impairs DNMT1 methyltransferase-independent transcription repressor activity, modulates DNMT1 cell cycle regulatory function and DNMT1-mediated gene silencing. Deacetylates RELA/NF-kappa-B p65 thereby inhibiting its transactivating potential and augments apoptosis in response to TNF-alpha. Deacetylates HIF1A, KAT5/TIP60, RB1 and HIC1. Deacetylates FOXO1 resulting in its nuclear retention and enhancement of its transcriptional activity leading to increased gluconeogenesis in liver. Inhibits E2F1 transcriptional activity and apoptotic function, possibly by deacetylation. Involved in HES1- and HEY2-mediated transcriptional repression. In cooperation with MYCN seems to be involved in transcriptional repression of DUSP6/MAPK3 leading to MYCN stabilization by phosphorylation at 'Ser-62'. Deacetylates MEF2D. Required for antagonist-mediated transcription suppression of AR-dependent genes which may be linked to local deacetylation of histone H3. Represses HNF1A-mediated transcription. Required for the repression of ESRRG by CREBZF. Deacetylates NR1H3 and NR1H2 and deacetylation of NR1H3 at 'Lys-434' positively regulates transcription of NR1H3:RXR target genes, promotes NR1H3 proteasomal degradation and results in cholesterol efflux; a promoter clearing mechanism after reach round of transcription is proposed. Involved in lipid metabolism: deacetylates LPIN1, thereby inhibiting diacylglycerol synthesis. Implicated in regulation of adipogenesis and fat mobilization in white adipocytes by repression of PPARG which probably involves association with NCOR1 and SMRT/NCOR2. Deacetylates p300/EP300 and PRMT1. Deacetylates ACSS2 leading to its activation, and HMGCS1 deacetylation. Involved in liver and muscle metabolism. Through deacetylation and activation of PPARGC1A is required to activate fatty acid oxidation in skeletal muscle under low-glucose conditions and is involved in glucose homeostasis. Involved in regulation of PPARA and fatty acid beta-oxidation in liver. Involved in positive regulation of insulin secretion in pancreatic beta cells in response to glucose; the function seems to imply transcriptional repression of UCP2. Proposed to deacetylate IRS2 thereby facilitating its insulin-induced tyrosine phosphorylation. Deacetylates SREBF1 isoform SREBP-1C thereby decreasing its stability and transactivation in lipogenic gene expression. Involved in DNA damage response by repressing genes which are involved in DNA repair, such as XPC and TP73, deacetylating XRCC6/Ku70, and facilitating recruitment of additional factors to sites of damaged DNA, such as SIRT1-deacetylated NBN can recruit ATM to initiate DNA repair and SIRT1-deacetylated XPA interacts with RPA2. Also involved in DNA repair of DNA double-strand breaks by homologous recombination and specifically single-strand annealing independently of XRCC6/Ku70 and NBN. Promotes DNA double-strand breaks by mediating deacetylation of SIRT6. Transcriptional suppression of XPC probably involves an E2F4:RBL2 suppressor complex and protein kinase B (AKT) signaling. Transcriptional suppression of TP73 probably involves E2F4 and PCAF. Deacetylates WRN thereby regulating its helicase and exonuclease activities and regulates WRN nuclear translocation in response to DNA damage. Deacetylates APEX1 at 'Lys-6' and 'Lys-7' and stimulates cellular AP endonuclease activity by promoting the association of APEX1 to XRCC1. Catalyzes deacetylation of ERCC4/XPF, thereby impairing interaction with ERCC1 and nucleotide excision repair (NER). Increases p53/TP53-mediated transcription-independent apoptosis by blocking nuclear translocation of cytoplasmic p53/TP53 and probably redirecting it to mitochondria. Deacetylates XRCC6/Ku70 at 'Lys-539' and 'Lys-542' causing it to sequester BAX away from mitochondria thereby inhibiting stress-induced apoptosis. Is involved in autophagy, presumably by deacetylating ATG5, ATG7 and MAP1LC3B/ATG8. Deacetylates AKT1 which leads to enhanced binding of AKT1 and PDK1 to PIP3 and promotes their activation. Proposed to play role in regulation of STK11/LBK1-dependent AMPK signaling pathways implicated in cellular senescence which seems to involve the regulation of the acetylation status of STK11/LBK1. Can deacetylate STK11/LBK1 and thereby increase its activity, cytoplasmic localization and association with STRAD; however, the relevance of such activity in normal cells is unclear. In endothelial cells is shown to inhibit STK11/LBK1 activity and to promote its degradation. Deacetylates SMAD7 at 'Lys-64' and 'Lys-70' thereby promoting its degradation. Deacetylates CIITA and augments its MHC class II transactivation and contributes to its stability. Deacetylates MECOM/EVI1. Deacetylates PML at 'Lys-487' and this deacetylation promotes PML control of PER2 nuclear localization. During the neurogenic transition, represses selective NOTCH1-target genes through histone deacetylation in a BCL6-dependent manner and leading to neuronal differentiation. Regulates the circadian expression of several core clock genes, including BMAL1, RORC, PER2 and CRY1 and plays a critical role in maintaining a controlled rhythmicity in histone acetylation, thereby contributing to circadian chromatin remodeling. Deacetylates BMAL1 and histones at the circadian gene promoters in order to facilitate repression by inhibitory components of the circadian oscillator. Deacetylates PER2, facilitating its ubiquitination and degradation by the proteasome. Protects cardiomyocytes against palmitate-induced apoptosis. Deacetylates XBP1 isoform 2; deacetylation decreases protein stability of XBP1 isoform 2 and inhibits its transcriptional activity. Deacetylates PCK1 and directs its activity toward phosphoenolpyruvate production promoting gluconeogenesis. Involved in the CCAR2-mediated regulation of PCK1 and NR1D1. Deacetylates CTNB1 at 'Lys-49'. In POMC (pro-opiomelanocortin) neurons, required for leptin-induced activation of PI3K signaling. Deacetylates SOX9; promoting SOX9 nuclear localization and transactivation activity. Involved in the regulation of centrosome duplication: deacetylates CENATAC in G1 phase, allowing for SASS6 accumulation on the centrosome and subsequent procentriole assembly. Deacetylates NDC80/HEC1. In addition to protein deacetylase activity, also acts as a protein-lysine deacylase by mediating protein delactylation, depropionylation and decrotonylation. Mediates depropionylation of Osterix (SP7). Catalyzes decrotonylation of histones; it however does not represent a major histone decrotonylase. Mediates protein delactylation of TEAD1 and YAP1. Functionally, deacetylates 'Lys-382' of p53/TP53, however with lower activity than isoform 1. In combination, the two isoforms exert an additive effect. Isoform 2 regulates p53/TP53 expression and cellular stress response and is in turn repressed by p53/TP53 presenting a SIRT1 isoform-dependent auto-regulatory loop. Its function is as follows. Catalytically inactive 75SirT1 may be involved in regulation of apoptosis. May be involved in protecting chondrocytes from apoptotic death by associating with cytochrome C and interfering with apoptosome assembly. In terms of biological role, (Microbial infection) In case of HIV-1 infection, interacts with and deacetylates the viral Tat protein. The viral Tat protein inhibits SIRT1 deacetylation activity toward RELA/NF-kappa-B p65, thereby potentiates its transcriptional activity and SIRT1 is proposed to contribute to T-cell hyperactivation during infection. The protein is NAD-dependent protein deacetylase sirtuin-1 of Homo sapiens (Human).